The primary structure comprises 120 residues: Large ribosomal subunit protein uL18 (120 aa).

It belongs to the universal ribosomal protein uL18 family. Part of the 50S ribosomal subunit; part of the 5S rRNA/L5/L18/L25 subcomplex. Contacts the 5S and 23S rRNAs.

Its function is as follows. This is one of the proteins that bind and probably mediate the attachment of the 5S RNA into the large ribosomal subunit, where it forms part of the central protuberance. The chain is Large ribosomal subunit protein uL18 from Geobacillus sp. (strain WCH70).